Reading from the N-terminus, the 334-residue chain is Glycerol-1-phosphate dehydrogenase [NAD(P)+] (334 aa).

Residues 77 to 81 and 99 to 102 each bind NAD(+); these read GKPID and TTAS. Asp104 lines the substrate pocket. Ser108 contacts NAD(+). Asp147 contacts substrate. Residues Asp147 and His225 each contribute to the Zn(2+) site. Residue His229 coordinates substrate. His246 is a binding site for Zn(2+).

Belongs to the glycerol-1-phosphate dehydrogenase family. Zn(2+) is required as a cofactor.

It is found in the cytoplasm. The catalysed reaction is sn-glycerol 1-phosphate + NAD(+) = dihydroxyacetone phosphate + NADH + H(+). The enzyme catalyses sn-glycerol 1-phosphate + NADP(+) = dihydroxyacetone phosphate + NADPH + H(+). Its pathway is membrane lipid metabolism; glycerophospholipid metabolism. Catalyzes the NAD(P)H-dependent reduction of dihydroxyacetonephosphate (DHAP or glycerone phosphate) to glycerol 1-phosphate (G1P). The G1P thus generated is used as the glycerophosphate backbone of phospholipids in the cellular membranes of Archaea. The sequence is that of Glycerol-1-phosphate dehydrogenase [NAD(P)+] from Methanococcus vannielii (strain ATCC 35089 / DSM 1224 / JCM 13029 / OCM 148 / SB).